A 160-amino-acid polypeptide reads, in one-letter code: ATP synthase subunit b, chloroplastic (160 aa).

A helical membrane pass occupies residues 12-31; sequence NVINIAILVVILIRFARQVV.

Belongs to the ATPase B chain family. In terms of assembly, F-type ATPases have 2 components, F(1) - the catalytic core - and F(0) - the membrane proton channel. F(1) has five subunits: alpha(3), beta(3), gamma(1), delta(1), epsilon(1). F(0) has four main subunits: a(1), b(1), b'(1) and c(10-14). The alpha and beta chains form an alternating ring which encloses part of the gamma chain. F(1) is attached to F(0) by a central stalk formed by the gamma and epsilon chains, while a peripheral stalk is formed by the delta, b and b' chains.

The protein resides in the plastid. The protein localises to the chloroplast thylakoid membrane. Its function is as follows. F(1)F(0) ATP synthase produces ATP from ADP in the presence of a proton or sodium gradient. F-type ATPases consist of two structural domains, F(1) containing the extramembraneous catalytic core and F(0) containing the membrane proton channel, linked together by a central stalk and a peripheral stalk. During catalysis, ATP synthesis in the catalytic domain of F(1) is coupled via a rotary mechanism of the central stalk subunits to proton translocation. In terms of biological role, component of the F(0) channel, it forms part of the peripheral stalk, linking F(1) to F(0). The protein is ATP synthase subunit b, chloroplastic of Cyanidioschyzon merolae (strain NIES-3377 / 10D) (Unicellular red alga).